Consider the following 168-residue polypeptide: Photosystem I assembly protein Ycf3 (168 aa).

TPR repeat units lie at residues 35–68 (AFTYYRDGMSAQSEGNYAEALQNYYEAMRLEIDP), 72–105 (SYILYNIGLIHTSNGEHTKALEYYFRALERNPFL), and 120–153 (GEQAIRQGDSEIAEAWSDQAAEYWKQAIALTPGN).

This sequence belongs to the Ycf3 family.

It localises to the plastid. Its subcellular location is the chloroplast thylakoid membrane. Its function is as follows. Essential for the assembly of the photosystem I (PSI) complex. May act as a chaperone-like factor to guide the assembly of the PSI subunits. The protein is Photosystem I assembly protein Ycf3 of Drimys granadensis.